Consider the following 474-residue polypeptide: Shufflon protein A (474 aa).

A constant region region spans residues 1-361 (MKKYDRGWAS…TGAILSCQSG (361 aa)). The interval 362 to 474 (TWKTSGSLNG…GVFSVFGYQT (113 aa)) is variable region.

In Escherichia coli, this protein is Shufflon protein A.